Reading from the N-terminus, the 184-residue chain is Photosystem I assembly protein Ycf4 (184 aa).

2 helical membrane-spanning segments follow: residues 22–42 (FCWA…GISS) and 57–77 (IIFF…LFIS).

The protein belongs to the Ycf4 family.

Its subcellular location is the plastid. The protein localises to the chloroplast thylakoid membrane. In terms of biological role, seems to be required for the assembly of the photosystem I complex. This chain is Photosystem I assembly protein Ycf4, found in Ipomoea purpurea (Common morning glory).